We begin with the raw amino-acid sequence, 440 residues long: UPF0489 protein C5orf22 homolog (440 aa).

Residues 187-207 (VEGSSSGIQSSTSESSEDGLM) are disordered. The segment covering 188–200 (EGSSSGIQSSTSE) has biased composition (low complexity).

The protein belongs to the UPF0489 family.

The protein is UPF0489 protein C5orf22 homolog of Xenopus tropicalis (Western clawed frog).